A 249-amino-acid polypeptide reads, in one-letter code: Putative S-adenosyl-L-methionine-dependent methyltransferase Mkms_0592 (249 aa).

S-adenosyl-L-methionine is bound by residues aspartate 111 and 141 to 142; that span reads DL.

Belongs to the UPF0677 family.

Its function is as follows. Exhibits S-adenosyl-L-methionine-dependent methyltransferase activity. The sequence is that of Putative S-adenosyl-L-methionine-dependent methyltransferase Mkms_0592 from Mycobacterium sp. (strain KMS).